Reading from the N-terminus, the 379-residue chain is F-box/kelch-repeat protein At4g33900 (379 aa).

The 47-residue stretch at 9–55 (IKRFLMLPDDLVFNCLARVSRLHYPTLSLVSKKFRFLLASKELYQTR) folds into the F-box domain. Kelch repeat units lie at residues 116 to 175 (EIYA…TLDG), 176 to 222 (RIYV…LSIS), and 262 to 308 (SCCV…RNFK).

This is F-box/kelch-repeat protein At4g33900 from Arabidopsis thaliana (Mouse-ear cress).